The following is a 424-amino-acid chain: Chloroquine resistance transporter (424 aa).

At M1–K49 the chain is on the cytoplasmic side. Residues L50 to N58 lie within the membrane without spanning it. Residues I59–L83 traverse the membrane as a helical segment. The Vacuolar portion of the chain corresponds to N84–Y89. A helical membrane pass occupies residues S90–L111. The Cytoplasmic portion of the chain corresponds to F112–F126. A helical membrane pass occupies residues N127–G147. The Vacuolar portion of the chain corresponds to L148–T152. Residues G153–L173 traverse the membrane as a helical segment. At I174 to H180 the chain is on the cytoplasmic side. Residues L181–S202 traverse the membrane as a helical segment. Residues F203–S210 lie on the Vacuolar side of the membrane. Residues I211 to K236 traverse the membrane as a helical segment. At K237–D241 the chain is on the cytoplasmic side. Residues I242 to V263 form a helical membrane-spanning segment. The Vacuolar segment spans residues Y264–I279. The stretch at W280–L292 is an intramembrane region. 2 disulfides stabilise this stretch: C289-C312 and C301-C309. Residues G293–G314 are Vacuolar-facing. A helical membrane pass occupies residues A315–K339. Residues F340 to M343 lie on the Cytoplasmic side of the membrane. The chain crosses the membrane as a helical span at residues T344–Y361. The Vacuolar portion of the chain corresponds to F362–R374. Residues L375 to I397 traverse the membrane as a helical segment. Topologically, residues L398–Q424 are cytoplasmic.

The protein belongs to the CRT-like transporter family. In terms of assembly, monomer.

The protein localises to the membrane. It is found in the vacuole membrane. It catalyses the reaction L-arginine(in) = L-arginine(out). The enzyme catalyses L-lysine(in) = L-lysine(out). The catalysed reaction is L-histidine(out) = L-histidine(in). It carries out the reaction Fe(3+)(in) = Fe(3+)(out). It catalyses the reaction Fe(2+)(in) = Fe(2+)(out). Functionally, nutrient transporter. Substrate transport is pH-dependent. Can transport arginine, lysine, histidine and peptides. Involved in maintaining the osmotic homeostasis of the digestive vacuole. Required for the normal asexual intraerythrocytic proliferation of parasites. Can transport Fe(2+) and Fe(3+). The polypeptide is Chloroquine resistance transporter (Plasmodium falciparum (isolate 7G8)).